The following is a 352-amino-acid chain: C-C chemokine receptor type 5 (352 aa).

Residues 1 to 30 lie on the Extracellular side of the membrane; sequence MDYQVSSPTYDIDYYTSEPCQKINVKQIAA. Tyrosine 3 bears the Sulfotyrosine mark. 2 O-linked (GalNAc...) serine glycosylation sites follow: serine 6 and serine 7. Residues tyrosine 10, tyrosine 14, and tyrosine 15 each carry the sulfotyrosine modification. Intrachain disulfides connect cysteine 20–cysteine 269 and cysteine 101–cysteine 178. A helical membrane pass occupies residues 31–58; the sequence is RLLPPLYSLVFIFGFVGNILVVLILINC. The Cytoplasmic segment spans residues 59 to 68; sequence KRLKSMTDIY. Residues 69 to 89 traverse the membrane as a helical segment; the sequence is LLNLAISDLLFLLTVPFWAHY. Topologically, residues 90 to 102 are extracellular; the sequence is AAAQWDFGNTMCQ. A helical membrane pass occupies residues 103-124; that stretch reads LLTGLYFIGFFSGIFFIILLTI. Over 125–141 the chain is Cytoplasmic; sequence DRYLAIVHAVFALKART. The helical transmembrane segment at 142 to 166 threads the bilayer; the sequence is VTFGVVTSVITWVVAVFASLPGIIF. The Extracellular segment spans residues 167 to 198; it reads TRSQREGLHYTCSSHFPYSQYQFWKNFQTLKM. A helical transmembrane segment spans residues 199-218; that stretch reads VILGLVLPLLVMVICYSGIL. The Cytoplasmic segment spans residues 219–235; the sequence is KTLLRCRNEKKRHRAVR. A helical membrane pass occupies residues 236–260; it reads LIFTIMIVYFLFWAPYNIVLLLNTF. The Extracellular segment spans residues 261 to 277; the sequence is QEFFGLNNCSSSNRLDQ. Residues 278-301 form a helical membrane-spanning segment; it reads AMQVTETLGMTHCCINPIIYAFVG. The Cytoplasmic portion of the chain corresponds to 302 to 352; that stretch reads EKFRNYLLVFFQKHIAKRFCKCCSIFQQEAPERASSVYTRSTAEQEISVGL. Residues cysteine 321, cysteine 323, and cysteine 324 are each lipidated (S-palmitoyl cysteine). Phosphoserine; by BARK1 is present on residues serine 336, serine 337, serine 342, and serine 349.

This sequence belongs to the G-protein coupled receptor 1 family. Interacts with PRAF2. Efficient ligand binding to CCL3/MIP-1alpha and CCL4/MIP-1beta requires sulfation, O-glycosylation and sialic acid modifications. Glycosylation on Ser-6 is required for efficient binding of CCL4. Interacts with GRK2. Interacts with ARRB1 and ARRB2. Interacts with CNIH4. Interacts with S100A4; this interaction stimulates T-lymphocyte chemotaxis. Post-translationally, sulfated on at least 2 of the N-terminal tyrosines. Sulfation is required for efficient binding of the chemokines, CCL3 and CCL4. Palmitoylation in the C-terminal is important for cell surface expression. In terms of processing, phosphorylation on serine residues in the C-terminal is stimulated by binding CC chemokines especially by APO-RANTES. Post-translationally, O-glycosylated, but not N-glycosylated. Ser-6 appears to be the major site even if Ser-7 may be also O-glycosylated. Also sialylated glycans present which contribute to chemokine binding. Thr-16 and Ser-17 may also be glycosylated and, if so, with small moieties such as a T-antigen.

It localises to the cell membrane. Its function is as follows. Receptor for a number of inflammatory CC-chemokines including CCL3/MIP-1-alpha, CCL4/MIP-1-beta and RANTES and subsequently transduces a signal by increasing the intracellular calcium ion level. May play a role in the control of granulocytic lineage proliferation or differentiation. Participates in T-lymphocyte migration to the infection site by acting as a chemotactic receptor. The sequence is that of C-C chemokine receptor type 5 (CCR5) from Macaca arctoides (Stump-tailed macaque).